Consider the following 423-residue polypeptide: Glucose-6-phosphate isomerase (423 aa).

Glutamate 279 functions as the Proton donor in the catalytic mechanism. Active-site residues include histidine 300 and lysine 413.

It belongs to the GPI family.

The protein resides in the cytoplasm. It catalyses the reaction alpha-D-glucose 6-phosphate = beta-D-fructose 6-phosphate. It functions in the pathway carbohydrate biosynthesis; gluconeogenesis. It participates in carbohydrate degradation; glycolysis; D-glyceraldehyde 3-phosphate and glycerone phosphate from D-glucose: step 2/4. In terms of biological role, catalyzes the reversible isomerization of glucose-6-phosphate to fructose-6-phosphate. In Acholeplasma laidlawii (strain PG-8A), this protein is Glucose-6-phosphate isomerase.